Here is a 270-residue protein sequence, read N- to C-terminus: Release factor glutamine methyltransferase (270 aa).

Residues 112-116, D135, W162, and N178 each bind S-adenosyl-L-methionine; that span reads GTGSG. Position 178 to 181 (178 to 181) interacts with substrate; the sequence is NPPY.

Belongs to the protein N5-glutamine methyltransferase family. PrmC subfamily.

It catalyses the reaction L-glutaminyl-[peptide chain release factor] + S-adenosyl-L-methionine = N(5)-methyl-L-glutaminyl-[peptide chain release factor] + S-adenosyl-L-homocysteine + H(+). Functionally, methylates the class 1 translation termination release factors RF1/PrfA and RF2/PrfB on the glutamine residue of the universally conserved GGQ motif. In Bordetella pertussis (strain Tohama I / ATCC BAA-589 / NCTC 13251), this protein is Release factor glutamine methyltransferase.